The sequence spans 579 residues: Deleted in azoospermia protein 4 (579 aa).

The segment covering 1-10 has biased composition (polar residues); it reads MSAANPETPN. The tract at residues 1-27 is disordered; sequence MSAANPETPNSTISREASTQSSSAAAS. The span at 11-27 shows a compositional bias: low complexity; sequence STISREASTQSSSAAAS. In terms of domain architecture, RRM 1 spans 40–115; the sequence is NTVFVGGIDA…KKLKLGPAIR (76 aa). A compositionally biased stretch (polar residues) spans 163-175; it reads QHVQSAANPETPN. The segment at 163–192 is disordered; it reads QHVQSAANPETPNSTISREASTQSSSAAAS. The span at 176–192 shows a compositional bias: low complexity; that stretch reads STISREASTQSSSAAAS. An RRM 2 domain is found at 205–280; the sequence is NTVFVGGIDA…KKLKLGPAIR (76 aa). DAZ domains follow at residues 332–355, 356–379, 380–403, 404–427, 428–451, 452–475, 476–499, 500–523, and 524–547; these read AYSAYPHSPGQVITGCQLLVYNYQ, EYPTYPDSAFQVTTGYQLPVYNYQ, PFPAYPRSPFQVTAGYQLPVYNYQ, AFPAYPNSPFQVATGYQFPVYNYQ, PFPAYPSSPFQVTAGYQLPVYNYQ, AFPAYPNSPVQVTTGYQLPVYNYQ, AFPAYPSSPFQVTTGYQLPVYNYQ, and AFPAYPNSAVQVTTGYQFHVYNYQ.

Belongs to the RRM DAZ family. As to quaternary structure, forms a heterodimer with BOLL and DAZL. Interacts with PUM2, DAZAP1, DAZAP2, DZIP1 and DZIP3. As to expression, testis-specific. Expression restricted to premeiotic germ cells, particularly in spermatogonia (at protein level).

It is found in the cytoplasm. Its subcellular location is the nucleus. In terms of biological role, RNA-binding protein that plays an essential role in spermatogenesis. May act by binding to the 3'-UTR of mRNAs and regulating their translation. The protein is Deleted in azoospermia protein 4 (DAZ4) of Homo sapiens (Human).